The sequence spans 490 residues: Betaine aldehyde dehydrogenase (490 aa).

K(+) is bound by residues Thr-26, Ile-27, and Asp-93. NAD(+) is bound at residue 150 to 152 (GAW). Lys-162 (charge relay system) is an active-site residue. 176 to 179 (KPSE) is an NAD(+) binding site. Val-180 is a K(+) binding site. 230-233 (GVAS) serves as a coordination point for NAD(+). Residue Leu-246 participates in K(+) binding. Glu-252 serves as the catalytic Proton acceptor. Gly-254, Cys-286, and Glu-387 together coordinate NAD(+). Catalysis depends on Cys-286, which acts as the Nucleophile. The residue at position 286 (Cys-286) is a Cysteine sulfenic acid (-SOH). K(+)-binding residues include Lys-457 and Gly-460. Glu-464 acts as the Charge relay system in catalysis.

The protein belongs to the aldehyde dehydrogenase family. In terms of assembly, dimer of dimers. The cofactor is K(+).

The enzyme catalyses betaine aldehyde + NAD(+) + H2O = glycine betaine + NADH + 2 H(+). It functions in the pathway amine and polyamine biosynthesis; betaine biosynthesis via choline pathway; betaine from betaine aldehyde: step 1/1. In terms of biological role, involved in the biosynthesis of the osmoprotectant glycine betaine. Catalyzes the irreversible oxidation of betaine aldehyde to the corresponding acid. The protein is Betaine aldehyde dehydrogenase of Escherichia coli (strain K12 / DH10B).